The following is a 336-amino-acid chain: Type II methyltransferase M2.HphI (336 aa).

This sequence belongs to the N(4)/N(6)-methyltransferase family.

It catalyses the reaction a 2'-deoxyadenosine in DNA + S-adenosyl-L-methionine = an N(6)-methyl-2'-deoxyadenosine in DNA + S-adenosyl-L-homocysteine + H(+). In terms of biological role, an alpha subtype methylase that recognizes the double-stranded sequence 5'-GGTGA-3', probably methylates A-5 on the top strand, and protects the DNA from cleavage by the HphI endonuclease. The chain is Type II methyltransferase M2.HphI (hphIBM) from Haemophilus parahaemolyticus.